Here is a 309-residue protein sequence, read N- to C-terminus: Lipoyl synthase (309 aa).

7 residues coordinate [4Fe-4S] cluster: cysteine 43, cysteine 48, cysteine 54, cysteine 70, cysteine 74, cysteine 77, and serine 283. The Radical SAM core domain maps to 56–272 (AVRKTATFMI…KEIAMQKGFS (217 aa)).

It belongs to the radical SAM superfamily. Lipoyl synthase family. Requires [4Fe-4S] cluster as cofactor.

It localises to the cytoplasm. The catalysed reaction is [[Fe-S] cluster scaffold protein carrying a second [4Fe-4S](2+) cluster] + N(6)-octanoyl-L-lysyl-[protein] + 2 oxidized [2Fe-2S]-[ferredoxin] + 2 S-adenosyl-L-methionine + 4 H(+) = [[Fe-S] cluster scaffold protein] + N(6)-[(R)-dihydrolipoyl]-L-lysyl-[protein] + 4 Fe(3+) + 2 hydrogen sulfide + 2 5'-deoxyadenosine + 2 L-methionine + 2 reduced [2Fe-2S]-[ferredoxin]. The protein operates within protein modification; protein lipoylation via endogenous pathway; protein N(6)-(lipoyl)lysine from octanoyl-[acyl-carrier-protein]. Catalyzes the radical-mediated insertion of two sulfur atoms into the C-6 and C-8 positions of the octanoyl moiety bound to the lipoyl domains of lipoate-dependent enzymes, thereby converting the octanoylated domains into lipoylated derivatives. The chain is Lipoyl synthase from Shouchella clausii (strain KSM-K16) (Alkalihalobacillus clausii).